The following is a 937-amino-acid chain: Hexon protein (937 aa).

Residue Ala-2 is modified to N-acetylalanine; by host. 2 disordered regions span residues 190–210 (PQVGEESWTDTDGTNEKFGGR) and 224–251 (SFARPTNIKGGQAKNRKVKPTEGDVETE). Position 925 is a phosphotyrosine; by host (Tyr-925).

This sequence belongs to the adenoviridae hexon protein family. In terms of assembly, homotrimer. Interacts with the capsid vertex protein; this interaction binds the peripentonal hexons to the neighboring penton base. Interacts with the hexon-linking protein; this interaction tethers the hexons surrounding the penton to those situated in the central plate of the facet. Interacts with the hexon-interlacing protein; this interaction lashes the hexons together. Interacts with host dyneins DYNC1LI1 and DYNC1I2; this interaction might be involved in intracellular microtubule-dependent transport of incoming viral capsid. Interacts with the shutoff protein; this interaction allows folding and formation of hexons trimers. Interacts with pre-protein VI; this interaction probably allows nuclear import of hexon trimers and possibly pre-capsid assembly.

It is found in the virion. The protein resides in the host nucleus. Its function is as follows. Major capsid protein that self-associates to form 240 hexon trimers, each in the shape of a hexagon, building most of the pseudo T=25 capsid. Assembled into trimeric units with the help of the chaperone shutoff protein. Transported by pre-protein VI to the nucleus where it associates with other structural proteins to form an empty capsid. Might be involved, through its interaction with host dyneins, in the intracellular microtubule-dependent transport of incoming viral capsid to the nucleus. The sequence is that of Hexon protein from Homo sapiens (Human).